The sequence spans 388 residues: Pre-mRNA-splicing factor cwf2 (388 aa).

A disordered region spans residues 43–63; that stretch reads VKRKKQPARKQIETRPEYEME. The C3H1-type zinc-finger motif lies at 111 to 138; sequence NPGSFFCLYFARGMCSEGSKCEYLHRLP. In terms of domain architecture, RRM spans 174–248; sequence YTLYVGGITP…ECLNVRWATT (75 aa). The segment at 331-352 is disordered; the sequence is PNKSQSEEGSNDDHKSVTTTES.

This sequence belongs to the RRM CWC2 family. Belongs to the 40S cdc5-associated complex (or cwf complex), a spliceosome sub-complex reminiscent of a late-stage spliceosome composed of the U2, U5 and U6 snRNAs and at least brr2, cdc5, cwf2/prp3, cwf3/syf1, cwf4/syf3, cwf5/ecm2, spp42/cwf6, cwf7/spf27, cwf8, cwf9, cwf10, cwf11, cwf12, prp45/cwf13, cwf14, cwf15, cwf16, cwf17, cwf18, cwf19, cwf20, cwf21, cwf22, cwf23, cwf24, cwf25, cwf26, cyp7/cwf27, cwf28, cwf29/ist3, lea1, msl1, prp5/cwf1, prp10, prp12/sap130, prp17, prp22, sap61, sap62, sap114, sap145, slu7, smb1, smd1, smd3, smf1, smg1 and syf2.

The protein localises to the nucleus. Involved in the first step of pre-mRNA splicing. Required for cell growth and cell cycle control. Plays a role in the levels of the U1, U4, U5 and U6 snRNAs and the maintenance of the U4/U6 snRNA complex. May provide the link between the 'nineteen complex' NTC spliceosome protein complex and the spliceosome through the U6 snRNA. Associates predominantly with U6 snRNAs in assembled active spliceosomes. Binds directly to the internal stem-loop (ISL) domain of the U6 snRNA and to the pre-mRNA intron near the 5' splice site during the activation and catalytic phases of the spliceosome cycle. Involved in pre-mRNA splicing. In Schizosaccharomyces pombe (strain 972 / ATCC 24843) (Fission yeast), this protein is Pre-mRNA-splicing factor cwf2 (cwf2).